The sequence spans 177 residues: Small ribosomal subunit protein uS5 (177 aa).

Residues 19–82 (WQERVVQIRR…ADGKKQLVEV (64 aa)) enclose the S5 DRBM domain.

Belongs to the universal ribosomal protein uS5 family. In terms of assembly, part of the 30S ribosomal subunit. Contacts proteins S4 and S8.

With S4 and S12 plays an important role in translational accuracy. Functionally, located at the back of the 30S subunit body where it stabilizes the conformation of the head with respect to the body. The sequence is that of Small ribosomal subunit protein uS5 from Acaryochloris marina (strain MBIC 11017).